The primary structure comprises 369 residues: MRFDGESDYRHGSPEILGVLVTNLGTPDAPTPKALRRYLKEFLWDPRVVEIPRAAWWLILNGIILNVRPRRSAKLYEQVWTEEGSPLLVIGRRQAEGVATRLSERLPGPVKVELAMRYGQPSIESGLMRLREAGARRILVLPLYPQYSGSTGGSTFDQVSRVLRRWRWVPGLRFVSDYHSDAGYLDALAESVRAYWDQHGRGSKLLMSFHGVPKRYLLAGDPYHCQCHATGRQLAERLGLKEGEWVVTFQSRFGKAEWLKPYTDMTVKALGEEKLGRLDVVCPGFSADCLETIEEIAGENREIFQHAGGGEFHYIPALNDNPDHLDALADLVLRNVQGWPEANPGYDATARQSAAEASRARALGMGAKD.

His-210 and Glu-291 together coordinate Fe cation.

This sequence belongs to the ferrochelatase family.

It is found in the cytoplasm. The enzyme catalyses heme b + 2 H(+) = protoporphyrin IX + Fe(2+). It functions in the pathway porphyrin-containing compound metabolism; protoheme biosynthesis; protoheme from protoporphyrin-IX: step 1/1. Functionally, catalyzes the ferrous insertion into protoporphyrin IX. This is Ferrochelatase from Thioalkalivibrio sulfidiphilus (strain HL-EbGR7).